The primary structure comprises 388 residues: Amylovoran biosynthesis protein AmsL (388 aa).

Transmembrane regions (helical) follow at residues 24–44 (VLLS…ISWF), 47–67 (LPQL…LGSL), 97–117 (FTVI…LGLF), 231–251 (FVIM…SPVI), 297–317 (FYWN…VWIW), and 359–379 (ISVS…NLFI).

This sequence belongs to the polysaccharide synthase family.

Its subcellular location is the cell membrane. The protein operates within glycan metabolism; exopolysaccharide biosynthesis. Involved in the biosynthesis of amylovoran which functions as a virulence factor. This chain is Amylovoran biosynthesis protein AmsL (amsL), found in Erwinia amylovora (Fire blight bacteria).